The primary structure comprises 234 residues: Ribose-5-phosphate isomerase A (234 aa).

Substrate contacts are provided by residues threonine 28 to threonine 31, aspartate 83 to aspartate 86, and lysine 96 to glycine 99. Residue glutamate 105 is the Proton acceptor of the active site. A substrate-binding site is contributed by lysine 123.

It belongs to the ribose 5-phosphate isomerase family. As to quaternary structure, homodimer.

The catalysed reaction is aldehydo-D-ribose 5-phosphate = D-ribulose 5-phosphate. It functions in the pathway carbohydrate degradation; pentose phosphate pathway; D-ribose 5-phosphate from D-ribulose 5-phosphate (non-oxidative stage): step 1/1. Functionally, catalyzes the reversible conversion of ribose-5-phosphate to ribulose 5-phosphate. This is Ribose-5-phosphate isomerase A from Bartonella quintana (strain Toulouse) (Rochalimaea quintana).